The chain runs to 261 residues: Kallikrein-1 (261 aa).

The signal sequence occupies residues 1–18 (MWFLILFLALSLGRNDAA). Residues 19-24 (PPVQSR) constitute a propeptide, activation peptide. The Peptidase S1 domain maps to 25–258 (VVGGYNCEMN…FTPWIKEVMK (234 aa)). Cystine bridges form between cysteine 31–cysteine 173, cysteine 50–cysteine 66, cysteine 152–cysteine 219, cysteine 184–cysteine 198, and cysteine 209–cysteine 234. The Charge relay system role is filled by histidine 65. An N-linked (GlcNAc...) asparagine glycan is attached at asparagine 108. The active-site Charge relay system is the aspartate 120. The active-site Charge relay system is the serine 213.

The protein belongs to the peptidase S1 family. Kallikrein subfamily. In terms of tissue distribution, high levels in pancreas, submaxillary and parotid glands, spleen, and kidney.

It catalyses the reaction Preferential cleavage of Arg-|-Xaa bonds in small molecule substrates. Highly selective action to release kallidin (lysyl-bradykinin) from kininogen involves hydrolysis of Met-|-Xaa or Leu-|-Xaa.. This Rattus norvegicus (Rat) protein is Kallikrein-1 (Ngfg).